A 422-amino-acid polypeptide reads, in one-letter code: Transcription termination factor Rho (422 aa).

The Rho RNA-BD domain maps to 52–127 (EVGGDGVLEV…TRVTKINFDD (76 aa)). Residues 173-178 (GKGQRG), 185-190 (RTGKTV), and arginine 216 each bind ATP.

It belongs to the Rho family. As to quaternary structure, homohexamer. The homohexamer assembles into an open ring structure.

Functionally, facilitates transcription termination by a mechanism that involves Rho binding to the nascent RNA, activation of Rho's RNA-dependent ATPase activity, and release of the mRNA from the DNA template. This is Transcription termination factor Rho from Cereibacter sphaeroides (strain ATCC 17023 / DSM 158 / JCM 6121 / CCUG 31486 / LMG 2827 / NBRC 12203 / NCIMB 8253 / ATH 2.4.1.) (Rhodobacter sphaeroides).